A 436-amino-acid polypeptide reads, in one-letter code: UDP-N-acetylmuramoylalanine--D-glutamate ligase (436 aa).

112–118 serves as a coordination point for ATP; that stretch reads GSNGKST.

It belongs to the MurCDEF family.

The protein resides in the cytoplasm. The enzyme catalyses UDP-N-acetyl-alpha-D-muramoyl-L-alanine + D-glutamate + ATP = UDP-N-acetyl-alpha-D-muramoyl-L-alanyl-D-glutamate + ADP + phosphate + H(+). Its pathway is cell wall biogenesis; peptidoglycan biosynthesis. Cell wall formation. Catalyzes the addition of glutamate to the nucleotide precursor UDP-N-acetylmuramoyl-L-alanine (UMA). The sequence is that of UDP-N-acetylmuramoylalanine--D-glutamate ligase from Photorhabdus laumondii subsp. laumondii (strain DSM 15139 / CIP 105565 / TT01) (Photorhabdus luminescens subsp. laumondii).